Consider the following 551-residue polypeptide: Solute carrier family 22 member 27 (551 aa).

The Cytoplasmic portion of the chain corresponds to 1–15; it reads MSFQELLNQVGSLGR. Residues 16–36 form a helical membrane-spanning segment; sequence FQILQIVFLLLLNAIVVPHIA. The Extracellular portion of the chain corresponds to 37 to 145; it reads MENFTAAIPN…DLVCESQALN (109 aa). N-linked (GlcNAc...) asparagine glycosylation is found at Asn-39, Asn-56, Asn-62, Asn-102, and Asn-107. A helical transmembrane segment spans residues 146-166; sequence SVTKFSFMIGLFIGGIICGHL. The Cytoplasmic segment spans residues 167-173; sequence SDRLGRK. A helical membrane pass occupies residues 174–194; the sequence is FILTCALLQFAITETCVAFAP. Topologically, residues 195–203 are extracellular; that stretch reads SFFIYCSLR. The helical transmembrane segment at 204–224 threads the bilayer; sequence FLAGLSVEPILVNSHLLMLEW. Topologically, residues 225 to 234 are cytoplasmic; it reads TSPKFLTMMA. The chain crosses the membrane as a helical span at residues 235 to 255; the sequence is ALLSCAPNIGYMISAGLAFLF. The Extracellular portion of the chain corresponds to 256-258; the sequence is RIW. The helical transmembrane segment at 259-279 threads the bilayer; that stretch reads HHLQLTMSVPIFFFLILTRWL. Residues 280-348 lie on the Cytoplasmic side of the membrane; sequence SESARWLIVT…LFHTSILRKR (69 aa). A helical transmembrane segment spans residues 349 to 369; the sequence is ICVLSFMRLFFTVSIFGLAVH. The Extracellular portion of the chain corresponds to 370-376; the sequence is LQHLSSN. Residues 377-397 form a helical membrane-spanning segment; that stretch reads IILLQFLISALAILVSVIGPF. Over 398–405 the chain is Cytoplasmic; it reads VLNHIGRR. The helical transmembrane segment at 406–426 threads the bilayer; it reads ITYLVLMSLRGIFILIAVFVP. Residues 427–432 are Extracellular-facing; sequence QEMQTL. Residues 433–453 form a helical membrane-spanning segment; sequence RIIMATLAEGISSLCVGVSRL. At 454 to 467 the chain is on the cytoplasmic side; it reads HTNELLPTTLRATA. A helical transmembrane segment spans residues 468–488; sequence VGVIGFFGNSGSFLSPLFMLL. The Extracellular portion of the chain corresponds to 489-494; it reads ATYYAN. The chain crosses the membrane as a helical span at residues 495–515; that stretch reads MPWIFYGGFSIFNAFTVFLLP. Residues 516 to 551 lie on the Cytoplasmic side of the membrane; the sequence is ETKNQPLPDSTHDVGNDWKESRKGKKEDPIIKVTRF. The segment at 523–551 is disordered; the sequence is PDSTHDVGNDWKESRKGKKEDPIIKVTRF. Basic and acidic residues predominate over residues 525–545; it reads STHDVGNDWKESRKGKKEDPI.

The protein belongs to the major facilitator (TC 2.A.1) superfamily. Organic cation transporter (TC 2.A.1.19) family. In terms of tissue distribution, expressed in proximal kidney tubules, and in liver hepatocytes (at protein level).

The protein resides in the cell membrane. Functionally, does not appear to have transporter activity. Sodium-independent organic anion transporter which exhibits high specificity for L-carnitine. Can also transport salicylic acid and the drug cimetidine. The sequence is that of Solute carrier family 22 member 27 from Mus musculus (Mouse).